The following is a 911-amino-acid chain: Protein translocase subunit SecA (911 aa).

Residues glutamine 87, 105–109, and aspartate 512 each bind ATP; that span reads GEGKT. Basic and acidic residues predominate over residues 561–571; that stretch reads RHESRRIDNQL. Residues 561–583 form a disordered region; the sequence is RHESRRIDNQLRGRSGRQGDPGS. Cysteine 895, cysteine 897, cysteine 906, and histidine 907 together coordinate Zn(2+).

The protein belongs to the SecA family. As to quaternary structure, monomer and homodimer. Part of the essential Sec protein translocation apparatus which comprises SecA, SecYEG and auxiliary proteins SecDF-YajC and YidC. It depends on Zn(2+) as a cofactor.

Its subcellular location is the cell inner membrane. It is found in the cytoplasm. The enzyme catalyses ATP + H2O + cellular proteinSide 1 = ADP + phosphate + cellular proteinSide 2.. Functionally, part of the Sec protein translocase complex. Interacts with the SecYEG preprotein conducting channel. Has a central role in coupling the hydrolysis of ATP to the transfer of proteins into and across the cell membrane, serving both as a receptor for the preprotein-SecB complex and as an ATP-driven molecular motor driving the stepwise translocation of polypeptide chains across the membrane. The protein is Protein translocase subunit SecA of Pseudomonas putida (strain W619).